The chain runs to 115 residues: Large ribosomal subunit protein bL20c (115 aa).

This sequence belongs to the bacterial ribosomal protein bL20 family.

The protein resides in the plastid. It is found in the chloroplast. In terms of biological role, binds directly to 23S ribosomal RNA and is necessary for the in vitro assembly process of the 50S ribosomal subunit. It is not involved in the protein synthesizing functions of that subunit. The polypeptide is Large ribosomal subunit protein bL20c (rpl20) (Cyanidium caldarium (Red alga)).